Consider the following 674-residue polypeptide: tRNA-guanine(15) transglycosylase (674 aa).

Aspartate 90 serves as the catalytic Nucleophile. Residues aspartate 125 and alanine 192 each contribute to the substrate site. Zn(2+) is bound by residues cysteine 275, cysteine 277, and cysteine 280. A PUA domain is found at 596 to 671; it reads HNRVVVSEDS…QAIKTRKWKK (76 aa).

It belongs to the archaeosine tRNA-ribosyltransferase family. The cofactor is Zn(2+).

The catalysed reaction is guanosine(15) in tRNA + 7-cyano-7-deazaguanine = 7-cyano-7-carbaguanosine(15) in tRNA + guanine. Its pathway is tRNA modification; archaeosine-tRNA biosynthesis. In terms of biological role, exchanges the guanine residue with 7-cyano-7-deazaguanine (preQ0) at position 15 in the dihydrouridine loop (D-loop) of archaeal tRNAs. This chain is tRNA-guanine(15) transglycosylase, found in Methanosphaera stadtmanae (strain ATCC 43021 / DSM 3091 / JCM 11832 / MCB-3).